Here is a 463-residue protein sequence, read N- to C-terminus: Increased DNA methylation 3 (463 aa).

Residues 169-182 (NLDESRETEQDCSR) are compositionally biased toward basic and acidic residues. Disordered stretches follow at residues 169-199 (NLDE…DYNS) and 300-347 (RRFK…TTGT). The span at 184 to 199 (GDATANGVVTNEDYNS) shows a compositional bias: polar residues. Residues 300–310 (RRFKNSSKKAT) show a composition bias toward basic residues.

Interacts with MBD7 (via C-terminus), IDM1 and IDM2. Part of a complex made of MBD7, IDM1, IDM2 and IDM3.

The protein resides in the nucleus. Functionally, acts as an anti-silencing factor that prevents DNA hypermethylation and gene repression. The sequence is that of Increased DNA methylation 3 from Arabidopsis thaliana (Mouse-ear cress).